Reading from the N-terminus, the 456-residue chain is Signal transduction histidine-protein kinase ArlS (456 aa).

A run of 2 helical transmembrane segments spans residues 13–33 and 157–177; these read LITT…IIFF and IVAL…SYIF. One can recognise an HAMP domain in the interval 179 to 232; that stretch reads SQITKPIVTMSNKMNQIRRDGFQNKLELTTNYEETDNLIDTFNEMMYQIEESFN. Residues 240-456 form the Histidine kinase domain; it reads DASHELRTPL…TFKISFPVLN (217 aa). His243 carries the phosphohistidine; by autocatalysis modification.

Post-translationally, autophosphorylated.

The protein localises to the cell membrane. The catalysed reaction is ATP + protein L-histidine = ADP + protein N-phospho-L-histidine.. In terms of biological role, member of the two-component regulatory system ArlS/ArlR. ArlS probably functions as a sensor protein kinase which is autophosphorylated at a histidine residue and transfers its phosphate group to ArlR. This Staphylococcus epidermidis (strain ATCC 35984 / DSM 28319 / BCRC 17069 / CCUG 31568 / BM 3577 / RP62A) protein is Signal transduction histidine-protein kinase ArlS (arlS).